The following is a 767-amino-acid chain: 5-methyltetrahydropteroyltriglutamate--homocysteine methyltransferase (767 aa).

5-methyltetrahydropteroyltri-L-glutamate-binding positions include Arg-17–Lys-20 and Lys-117. L-homocysteine is bound by residues Ile-442–Ser-444 and Glu-495. L-methionine-binding positions include Ile-442–Ser-444 and Glu-495. 5-methyltetrahydropteroyltri-L-glutamate-binding positions include Arg-526–Cys-527 and Trp-572. Residue Asp-610 coordinates L-homocysteine. An L-methionine-binding site is contributed by Asp-610. A 5-methyltetrahydropteroyltri-L-glutamate-binding site is contributed by Glu-616. Residues His-653, Cys-655, and Glu-677 each contribute to the Zn(2+) site. The active-site Proton donor is His-706. Residue Cys-738 participates in Zn(2+) binding.

This sequence belongs to the vitamin-B12 independent methionine synthase family. The cofactor is Zn(2+).

It carries out the reaction 5-methyltetrahydropteroyltri-L-glutamate + L-homocysteine = tetrahydropteroyltri-L-glutamate + L-methionine. Its pathway is amino-acid biosynthesis; L-methionine biosynthesis via de novo pathway; L-methionine from L-homocysteine (MetE route): step 1/1. Functionally, catalyzes the transfer of a methyl group from 5-methyltetrahydrofolate to homocysteine resulting in methionine formation. The chain is 5-methyltetrahydropteroyltriglutamate--homocysteine methyltransferase from Bifidobacterium animalis subsp. lactis (strain AD011).